A 193-amino-acid polypeptide reads, in one-letter code: Thymidine kinase (193 aa).

Residues 9–16 (SAMNAGKS) and 87–90 (DEAQ) each bind ATP. Glutamate 88 serves as the catalytic Proton acceptor. Positions 145, 147, 182, and 185 each coordinate Zn(2+).

This sequence belongs to the thymidine kinase family. Homotetramer.

It localises to the cytoplasm. It carries out the reaction thymidine + ATP = dTMP + ADP + H(+). The polypeptide is Thymidine kinase (Idiomarina loihiensis (strain ATCC BAA-735 / DSM 15497 / L2-TR)).